The sequence spans 502 residues: Thermosome subunit beta (502 aa).

The protein belongs to the TCP-1 chaperonin family. As to quaternary structure, forms a Heterooligomeric complex of two stacked eight-membered rings.

Its function is as follows. Molecular chaperone; binds unfolded polypeptides in vitro, and has a weak ATPase activity. This chain is Thermosome subunit beta (thsB), found in Desulfurococcus mucosus (Desulfurococcus mobilis).